A 150-amino-acid polypeptide reads, in one-letter code: Large ribosomal subunit protein bL9 (150 aa).

Belongs to the bacterial ribosomal protein bL9 family.

Functionally, binds to the 23S rRNA. This chain is Large ribosomal subunit protein bL9, found in Pediococcus pentosaceus (strain ATCC 25745 / CCUG 21536 / LMG 10740 / 183-1w).